A 489-amino-acid polypeptide reads, in one-letter code: MSIDDVIYVICLLGCIGAGSYVKKIADEGQRKLVSTGLGVLVVVIVSGLHSLHCFVSLALGTAAVLLVHPSKGHLVTFAVMFGYLVFFRIFDFYFGIPGHTNMIQMILTLKVSGIAFEKTAAWKRLQAHDEQKKNDQRDVHQESPIEITDYDVELQSLSAAEILHYSFNYIGVLTGPYYRYRTYRDYFEMPFKTYAPTVEATLEKLKYAVFYCALYLATNYMWPLDYALSDEFFNDRSFVYRLLYVWPTFFTFRARIYTGLTLSECVCTMAGFGAYPDESDPNNGEGPRKRYQHLKRDADKHTYNFTTIVNTRVLEVERCWTFREGMKHWNVCVQYWLAVNVYKLFPSKKYRTGATLLCSAYWHGFRPGHYFCIMGAPFYVSLEDMWDKLVRKSATGTSRRVIDVIFWIFKWFAFSYLGEAFLLSSFGNIWRFYSSVYHIGYISWAAMTALGFYLTSQRKAAERRKKRAAEKAAGGDGIAAAIEKEKAQ.

The next 3 membrane-spanning stretches (helical) occupy residues 2 to 22, 40 to 60, and 75 to 95; these read SIDD…GSYV, VLVV…SLAL, and LVTF…DFYF. Residues Asn331 and His364 contribute to the active site. Transmembrane regions (helical) follow at residues 405-425 and 433-453; these read VIFW…FLLS and FYSS…ALGF.

Belongs to the membrane-bound acyltransferase family.

The protein localises to the membrane. The enzyme catalyses a 1-acyl-sn-glycero-3-phospho-(1D-myo-inositol) + (5Z,8Z,11Z,14Z)-eicosatetraenoyl-CoA = a 1-acyl-2-(5Z,8Z,11Z,14Z-eicosatetraenoyl)-sn-glycero-3-phospho-(1D-myo-inositol) + CoA. It catalyses the reaction a 1-acyl-sn-glycero-3-phosphocholine + an acyl-CoA = a 1,2-diacyl-sn-glycero-3-phosphocholine + CoA. The catalysed reaction is (9Z)-hexadecenoyl-CoA + 1-hexadecanoyl-sn-glycero-3-phosphocholine = 1-hexadecanoyl-2-(9Z-hexadecenoyl)-sn-glycero-3-phosphocholine + CoA. It carries out the reaction a 1-acyl-sn-glycero-3-phospho-L-serine + an acyl-CoA = a 1,2-diacyl-sn-glycero-3-phospho-L-serine + CoA. The enzyme catalyses 1-(9Z-octadecenoyl)-sn-glycero-3-phospho-L-serine + (9Z)-hexadecenoyl-CoA = 1-(9Z-octadecenoyl)-2-(9Z-hexadecenoyl)-sn-glycero-3-phospho-L-serine + CoA. It catalyses the reaction a 1-acyl-sn-glycero-3-phosphoethanolamine + an acyl-CoA = a 1,2-diacyl-sn-glycero-3-phosphoethanolamine + CoA. The catalysed reaction is 1-hexadecanoyl-sn-glycero-3-phosphoethanolamine + (9Z)-hexadecenoyl-CoA = 1-hexadecanoyl-2-(9Z)-hexadecenoyl-sn-glycero-3-phosphoethanolamine + CoA. It functions in the pathway lipid metabolism; phospholipid metabolism. Functionally, acyltransferase that mediates the acylation of lysophospholipids to produce phospholipids (glycerophospholipids). Highest activity with lysophosphatidylinositol (1-acyl-sn-glycero-3-phospho-(1D-myo-inositol) or LPI) producing phosphatidylinositol (1,2-diacyl-sn-glycero-3-phospho-(1D-myo-inositol) or PI) (LPIAT activity), but also converts lysophosphatidylcholine (1-acyl-sn-glycero-3-phosphocholine or LPC) to phosphatidylcholine (1,2-diacyl-sn-glycero-3-phosphocholine or PC) (LPCAT activity), lysophosphatidylserine (1-acyl-2-hydroxy-sn-glycero-3-phospho-L-serine or LPS) to phosphatidylserine (1,2-diacyl-sn-glycero-3-phospho-L-serine or PS) (LPSAT activity), and lysophosphatidylethanolamine (1-acyl-sn-glycero-3-phosphoethanolamine or LPE) producing phosphatidylethanolamine (1,2-diacyl-sn-glycero-3-phosphoethanolamine or PE) (LPEAT activity). Has a preference for unsaturated fatty acid arachidonoyl-CoA ((5Z,8Z,11Z,14Z)-eicosatetraenoyl-CoA). Glycerophospholipids are important structural and functional components of cellular membrane, acyl-chain remodeling regulates the molecular species distribution of glycerophospholipids which can affect membrane fluidity and curvature. This Drosophila melanogaster (Fruit fly) protein is Membrane-bound acylglycerophosphatidylinositol O-acyltransferase frj.